Consider the following 67-residue polypeptide: Beta-defensin 103A (67 aa).

Residues Met1–Gly22 form the signal peptide. Intrachain disulfides connect Cys33/Cys62, Cys40/Cys55, and Cys45/Cys63.

Belongs to the beta-defensin family.

The protein resides in the secreted. Its function is as follows. Exhibits antimicrobial activity against Gram-positive and Gram-negative bacteria. This is Beta-defensin 103A (DEFB103A) from Gorilla gorilla gorilla (Western lowland gorilla).